Consider the following 2495-residue polypeptide: Non-reducing polyketide synthase adrD (2495 aa).

The segment at 14–252 is N-terminal acylcarrier protein transacylase domain (SAT); sequence VVFGPQSSEI…HHSRHVTAVQ (239 aa). One can recognise a Ketosynthase family 3 (KS3) domain in the interval 386–807; it reads VIPIAITGMG…GSNAALVVKQ (422 aa). Catalysis depends on for beta-ketoacyl synthase activity residues Cys-551, His-686, and His-725. The segment at 913–1222 is malonyl-CoA:ACP transacylase (MAT) domain; the sequence is LCFGGQNGNE…QALDLGGALA (310 aa). Ser-1000 functions as the For acyl/malonyl transferase activity in the catalytic mechanism. The segment at 1294-1422 is N-terminal hotdog fold; it reads KEFVQLLTKQ…GEISLHPFGQ (129 aa). Residues 1294-1601 form the PKS/mFAS DH domain; sequence KEFVQLLTKQ…FTSVSIAGLS (308 aa). Positions 1295 to 1600 are product template (PT) domain; that stretch reads EFVQLLTKQP…TFTSVSIAGL (306 aa). Catalysis depends on His-1325, which acts as the Proton acceptor; for dehydratase activity. The tract at residues 1450–1601 is C-terminal hotdog fold; that stretch reads ESSGLKGFAV…FTSVSIAGLS (152 aa). Asp-1508 acts as the Proton donor; for dehydratase activity in catalysis. The Carrier domain maps to 1651-1725; sequence SGHFMVVQEM…TLVQTIFPDA (75 aa). Ser-1685 carries the post-translational modification O-(pantetheine 4'-phosphoryl)serine. Residues 1887–2120 form a methyltransferase (CMeT) domain region; it reads QHTSEHNLLR…GFQWVDWTYN (234 aa). Residues 2150–2495 are thioesterase (TE) domain; sequence YLMNEETIVY…YEFLRDHVRY (346 aa). Active-site for thioesterase activity residues include Ser-2273 and Asp-2432.

It catalyses the reaction 3 malonyl-CoA + acetyl-CoA + 2 S-adenosyl-L-methionine = 3,5-dimethylorsellinate + 2 S-adenosyl-L-homocysteine + 3 CO2 + 4 CoA. It participates in secondary metabolite biosynthesis; terpenoid biosynthesis. Functionally, non-reducing polyketide synthase; part of the gene cluster that mediates the biosynthesis of andrastins, meroterpenoid compounds that exhibit inhibitory activity against ras farnesyltransferase, suggesting that they could be promising leads for antitumor agents. The first step of the pathway is the synthesis of 3,5-dimethylorsellinic acid (DMOA) by the polyketide synthase adrD via condensation of one acetyl-CoA starter unit with 3 malonyl-CoA units and 2 methylations. DMAO is then converted to farnesyl-DMAO by the prenyltransferase adrG. The methyltransferase adrK catalyzes the methylation of the carboxyl group of farnesyl-DMAO to farnesyl-DMAO methyl ester which is further converted to epoxyfarnesyl-DMAO methyl ester by the FAD-dependent monooxygenase adrH. The terpene cyclase adrI then catalyzes the carbon skeletal rearrangement to generate the andrastin E, the first compound in the pathway having the andrastin scaffold, with the tetracyclic ring system. The post-cyclization tailoring enzymes adrF, adrE, adrJ, and adrA, are involved in the conversion of andrastin E into andrastin A. The short chain dehydrogenase adrF is responsible for the oxidation of the C-3 a hydroxyl group of andrastin E to yield the corresponding ketone, andrastin D. The ketoreductase adrE stereoselectively reduces the carbonyl moiety to reverse the stereochemistry of the C-3 position to yield andrastin F. The acetyltransferase adrJ is the acetyltransferase that attaches the acetyl group to the C-3 hydroxyl group of andrastin F to yield andrastin C. Finally, the cytochrome P450 monooxygenase adrA catalyzes two sequential oxidation reactions of the C-23 methyl group, to generate the corresponding alcohol andrastin B, and aldehyde andrastin A. This is Non-reducing polyketide synthase adrD from Penicillium roqueforti.